The primary structure comprises 349 residues: Anthranilate phosphoribosyltransferase (349 aa).

5-phospho-alpha-D-ribose 1-diphosphate is bound by residues Gly82, 85–86 (GD), 92–95 (NVST), 110–118 (KHGNRAVSG), and Ser122. Gly82 serves as a coordination point for anthranilate. Ser94 lines the Mg(2+) pocket. An anthranilate-binding site is contributed by Asn113. Position 168 (Arg168) interacts with anthranilate. Residues Asp227 and Glu228 each contribute to the Mg(2+) site.

It belongs to the anthranilate phosphoribosyltransferase family. In terms of assembly, homodimer. The cofactor is Mg(2+).

The enzyme catalyses N-(5-phospho-beta-D-ribosyl)anthranilate + diphosphate = 5-phospho-alpha-D-ribose 1-diphosphate + anthranilate. It functions in the pathway amino-acid biosynthesis; L-tryptophan biosynthesis; L-tryptophan from chorismate: step 2/5. Catalyzes the transfer of the phosphoribosyl group of 5-phosphorylribose-1-pyrophosphate (PRPP) to anthranilate to yield N-(5'-phosphoribosyl)-anthranilate (PRA). The protein is Anthranilate phosphoribosyltransferase of Pseudomonas fluorescens (strain Pf0-1).